A 719-amino-acid polypeptide reads, in one-letter code: Phenylalanine--tRNA ligase beta subunit, chloroplastic (719 aa).

The B5 domain maps to 318-403 (DHALNINLSI…RIYGYHKFRS (86 aa)). Mg(2+) contacts are provided by D381, D387, E390, and E391. Residues 625 to 718 (SKYPSIIRDL…IVKQLNLKIR (94 aa)) enclose the FDX-ACB domain.

It belongs to the phenylalanyl-tRNA synthetase beta subunit family. Type 1 subfamily. As to quaternary structure, tetramer of two alpha and two beta subunits. The cofactor is Mg(2+).

The protein localises to the plastid. It localises to the chloroplast. It catalyses the reaction tRNA(Phe) + L-phenylalanine + ATP = L-phenylalanyl-tRNA(Phe) + AMP + diphosphate + H(+). This Pyropia yezoensis (Susabi-nori) protein is Phenylalanine--tRNA ligase beta subunit, chloroplastic.